We begin with the raw amino-acid sequence, 88 residues long: Small ribosomal subunit protein uS15 (88 aa).

This sequence belongs to the universal ribosomal protein uS15 family. Part of the 30S ribosomal subunit. Forms a bridge to the 50S subunit in the 70S ribosome, contacting the 23S rRNA.

Its function is as follows. One of the primary rRNA binding proteins, it binds directly to 16S rRNA where it helps nucleate assembly of the platform of the 30S subunit by binding and bridging several RNA helices of the 16S rRNA. Functionally, forms an intersubunit bridge (bridge B4) with the 23S rRNA of the 50S subunit in the ribosome. The chain is Small ribosomal subunit protein uS15 from Trichlorobacter lovleyi (strain ATCC BAA-1151 / DSM 17278 / SZ) (Geobacter lovleyi).